The primary structure comprises 431 residues: Tol-Pal system protein TolB (431 aa).

The N-terminal stretch at 1–26 is a signal peptide; sequence MSLMTKLGFRALVASCLITAGSAANA. The interval 406–431 is disordered; it reads DGSAPPQILSVQGGSVREPSWGPFMQ.

The protein belongs to the TolB family. In terms of assembly, the Tol-Pal system is composed of five core proteins: the inner membrane proteins TolA, TolQ and TolR, the periplasmic protein TolB and the outer membrane protein Pal. They form a network linking the inner and outer membranes and the peptidoglycan layer.

Its subcellular location is the periplasm. Functionally, part of the Tol-Pal system, which plays a role in outer membrane invagination during cell division and is important for maintaining outer membrane integrity. This is Tol-Pal system protein TolB from Burkholderia cenocepacia (strain HI2424).